Reading from the N-terminus, the 135-residue chain is Retinol-binding protein 5 (135 aa).

It belongs to the calycin superfamily. Fatty-acid binding protein (FABP) family.

Its subcellular location is the cytoplasm. Intracellular transport of retinol. The chain is Retinol-binding protein 5 (RBP5) from Pongo abelii (Sumatran orangutan).